The following is a 125-amino-acid chain: Probable 4-amino-4-deoxy-L-arabinose-phosphoundecaprenol flippase subunit ArnF (125 aa).

The Cytoplasmic segment spans residues 1-2 (MG). The chain crosses the membrane as a helical span at residues 3 to 23 (VMWGLISVAIASLAQLSLGFA). Residues 24–33 (MMRLPSIAHP) lie on the Periplasmic side of the membrane. A helical transmembrane segment spans residues 34–54 (LAFISGLGAFNAATLALFAGL). Residues 55–76 (AGYLVSVFCWQKTLHMLALSKA) lie on the Cytoplasmic side of the membrane. A helical transmembrane segment spans residues 77–97 (YALLSLSYVLVWVASMLLPGL). Residues 98–100 (QGA) are Periplasmic-facing. The helical transmembrane segment at 101-121 (FSLKAMLGVLCIMAGVMLIFL) threads the bilayer. Topologically, residues 122-125 (PARS) are cytoplasmic.

The protein belongs to the ArnF family. In terms of assembly, heterodimer of ArnE and ArnF.

The protein localises to the cell inner membrane. It participates in bacterial outer membrane biogenesis; lipopolysaccharide biosynthesis. Translocates 4-amino-4-deoxy-L-arabinose-phosphoundecaprenol (alpha-L-Ara4N-phosphoundecaprenol) from the cytoplasmic to the periplasmic side of the inner membrane. This chain is Probable 4-amino-4-deoxy-L-arabinose-phosphoundecaprenol flippase subunit ArnF, found in Salmonella paratyphi A (strain ATCC 9150 / SARB42).